Here is a 97-residue protein sequence, read N- to C-terminus: Large ribosomal subunit protein uL23 (97 aa).

It belongs to the universal ribosomal protein uL23 family. As to quaternary structure, part of the 50S ribosomal subunit. Contacts protein L29, and trigger factor when it is bound to the ribosome.

Functionally, one of the early assembly proteins it binds 23S rRNA. One of the proteins that surrounds the polypeptide exit tunnel on the outside of the ribosome. Forms the main docking site for trigger factor binding to the ribosome. The protein is Large ribosomal subunit protein uL23 of Lactiplantibacillus plantarum (strain ATCC BAA-793 / NCIMB 8826 / WCFS1) (Lactobacillus plantarum).